A 70-amino-acid chain; its full sequence is DNA-directed RNA polymerase subunit omega (70 aa).

This sequence belongs to the RNA polymerase subunit omega family. As to quaternary structure, the RNAP catalytic core consists of 2 alpha, 1 beta, 1 beta' and 1 omega subunit. When a sigma factor is associated with the core the holoenzyme is formed, which can initiate transcription.

The catalysed reaction is RNA(n) + a ribonucleoside 5'-triphosphate = RNA(n+1) + diphosphate. In terms of biological role, promotes RNA polymerase assembly. Latches the N- and C-terminal regions of the beta' subunit thereby facilitating its interaction with the beta and alpha subunits. In Bacillus anthracis, this protein is DNA-directed RNA polymerase subunit omega.